The following is a 612-amino-acid chain: Actin-binding LIM protein 2 (612 aa).

LIM zinc-binding domains are found at residues 22-81 (ILCN…LYGT), 81-141 (TRCF…TLLG), 151-210 (RSCG…KFGI), and 210-270 (IRCD…ARTE). Zn(2+) contacts are provided by Cys-83, Cys-86, His-103, Cys-106, Cys-109, Cys-112, Cys-131, and Cys-134. Positions 212, 215, 232, 235, 238, 241, 260, and 263 each coordinate Zn(2+). The span at 269-278 (TEDKSKETRT) shows a compositional bias: basic and acidic residues. Disordered regions lie at residues 269-295 (TEDKSKETRTSSESIVSVPASSTSGSP) and 341-433 (AVGD…DNIY). A compositionally biased stretch (low complexity) spans 279 to 295 (SSESIVSVPASSTSGSP). A phosphoserine mark is found at Ser-282, Ser-294, Gly-351, Arg-356, Ser-365, and Ser-368. Residues 364-373 (SSPSSAGSVS) are compositionally biased toward low complexity. Positions 394–416 (SGRSTPSLSVHSDSRPPSSTYQQ) are enriched in polar residues. Phosphoserine is present on Ser-453. The segment at 471 to 498 (ADTRTNSPDLDSQSLSLSSGTDQEPLQR) is disordered. Thr-473 carries the phosphothreonine modification. Phosphoserine is present on residues Ser-477 and Ser-579. Positions 477–489 (SPDLDSQSLSLSS) are enriched in low complexity. One can recognise an HP domain in the interval 544–612 (TREYKIYPYD…NDLKKKALLF (69 aa)).

As to quaternary structure, interacts with F-actin and ABRA. As to expression, expressed in brain. Highly expressed in caudate/putamen, moderately expressed in the olfactory bulb. In the hippocampus, expressed in the CA1, CA2 and CA3 fields. In the cerebellum, expressed in Purkinje cells.

The protein localises to the cytoplasm. Functionally, may act as scaffold protein. May stimulate ABRA activity and ABRA-dependent SRF transcriptional activity. The chain is Actin-binding LIM protein 2 (Ablim2) from Mus musculus (Mouse).